The sequence spans 107 residues: EMBRYO SURROUNDING FACTOR 1-like protein 5 (107 aa).

Positions 1 to 22 are cleaved as a signal peptide; the sequence is MSLLRFAILCIIFVSLFGVHEC. 4 cysteine pairs are disulfide-bonded: Cys-35/Cys-49, Cys-40/Cys-69, Cys-47/Cys-65, and Cys-50/Cys-58. Residues 87–107 traverse the membrane as a helical segment; the sequence is GLGPPIYLFFLGQFIYFVLGL.

The protein belongs to the MEG family. As to expression, expressed in flowers.

Its subcellular location is the membrane. The protein is EMBRYO SURROUNDING FACTOR 1-like protein 5 (ESFL5) of Arabidopsis thaliana (Mouse-ear cress).